The chain runs to 276 residues: MKRPWGKAVVKDPNPKITVHGFNNLTKSLSFNIFDIAYAKTEQHRQEYIEYIDELYNAERLTEILTNVTNIIGANILNVARQDYEPQGASVTMLIAEHETPPVGTDWDEEGPGPLPETVVAHLDKSHVTVHTYPESHPDNGISTFRVDVDVSTCGVISPLRALNYLIHSFDSDIVTVDYRVRGMTRDLDGTKHYIDHDINSIQNFLTEDTQNAYQMIDVNVYQENIFHTKMLLKDFDIDNYLFGAGRDEFAQTELDQIEERMKTEMLEIFYSRNLG.

Ser-126 (schiff-base intermediate with substrate; via pyruvic acid) is an active-site residue. Position 126 is a pyruvic acid (Ser); by autocatalysis (Ser-126). Catalysis depends on His-131, which acts as the Proton acceptor; for processing activity. The active-site Proton donor; for catalytic activity is the Cys-154.

This sequence belongs to the prokaryotic AdoMetDC family. Type 2 subfamily. As to quaternary structure, heterooctamer of four alpha and four beta chains arranged as a tetramer of alpha/beta heterodimers. It depends on pyruvate as a cofactor. In terms of processing, is synthesized initially as an inactive proenzyme. Formation of the active enzyme involves a self-maturation process in which the active site pyruvoyl group is generated from an internal serine residue via an autocatalytic post-translational modification. Two non-identical subunits are generated from the proenzyme in this reaction, and the pyruvate is formed at the N-terminus of the alpha chain, which is derived from the carboxyl end of the proenzyme. The post-translation cleavage follows an unusual pathway, termed non-hydrolytic serinolysis, in which the side chain hydroxyl group of the serine supplies its oxygen atom to form the C-terminus of the beta chain, while the remainder of the serine residue undergoes an oxidative deamination to produce ammonia and the pyruvoyl group blocking the N-terminus of the alpha chain.

It carries out the reaction S-adenosyl-L-methionine + H(+) = S-adenosyl 3-(methylsulfanyl)propylamine + CO2. Its pathway is amine and polyamine biosynthesis; S-adenosylmethioninamine biosynthesis; S-adenosylmethioninamine from S-adenosyl-L-methionine: step 1/1. Functionally, catalyzes the decarboxylation of S-adenosylmethionine to S-adenosylmethioninamine (dcAdoMet), the propylamine donor required for the synthesis of the polyamines spermine and spermidine from the diamine putrescine. In Alcanivorax borkumensis (strain ATCC 700651 / DSM 11573 / NCIMB 13689 / SK2), this protein is S-adenosylmethionine decarboxylase proenzyme.